The primary structure comprises 376 residues: Carbamoyl phosphate synthase small chain (376 aa).

A CPSase region spans residues 1–187; that stretch reads MKALLALEDG…KEDGSFLWKQ (187 aa). L-glutamine is bound by residues S45, G239, and G241. In terms of domain architecture, Glutamine amidotransferase type-1 spans 189–376; the sequence is KIPLIVYDYG…KEVVLLKLGC (188 aa). Residue C266 is the Nucleophile of the active site. Residues L267, Q270, N308, G310, and F311 each contribute to the L-glutamine site. Active-site residues include H349 and E351.

This sequence belongs to the CarA family. As to quaternary structure, composed of two chains; the small (or glutamine) chain promotes the hydrolysis of glutamine to ammonia, which is used by the large (or ammonia) chain to synthesize carbamoyl phosphate. Tetramer of heterodimers (alpha,beta)4.

The catalysed reaction is hydrogencarbonate + L-glutamine + 2 ATP + H2O = carbamoyl phosphate + L-glutamate + 2 ADP + phosphate + 2 H(+). It catalyses the reaction L-glutamine + H2O = L-glutamate + NH4(+). Its pathway is amino-acid biosynthesis; L-arginine biosynthesis; carbamoyl phosphate from bicarbonate: step 1/1. It functions in the pathway pyrimidine metabolism; UMP biosynthesis via de novo pathway; (S)-dihydroorotate from bicarbonate: step 1/3. In terms of biological role, small subunit of the glutamine-dependent carbamoyl phosphate synthetase (CPSase). CPSase catalyzes the formation of carbamoyl phosphate from the ammonia moiety of glutamine, carbonate, and phosphate donated by ATP, constituting the first step of 2 biosynthetic pathways, one leading to arginine and/or urea and the other to pyrimidine nucleotides. The small subunit (glutamine amidotransferase) binds and cleaves glutamine to supply the large subunit with the substrate ammonia. This Lawsonia intracellularis (strain PHE/MN1-00) protein is Carbamoyl phosphate synthase small chain.